The chain runs to 67 residues: MHLKNEVNNNMFVFTLCILLYSSFCYFFYIEKILQHTKPIYTNYGQLCICKINKYKYGYSVNIFYRR.

This is an uncharacterized protein from Swinepox virus (strain Kasza) (SWPV).